Here is a 331-residue protein sequence, read N- to C-terminus: Probable tRNA pseudouridine synthase B (331 aa).

Over residues 1 to 15 the composition is skewed to basic and acidic residues; the sequence is MRCSQREVFVKREEP. The segment at 1-27 is disordered; the sequence is MRCSQREVFVKREEPTNPEWGKPPSQR. Residue aspartate 71 is the Nucleophile of the active site. The PUA domain maps to 238–313; sequence LPKIWVRDSA…AVVRTDRVVM (76 aa).

This sequence belongs to the pseudouridine synthase TruB family. Type 2 subfamily.

The enzyme catalyses uridine(55) in tRNA = pseudouridine(55) in tRNA. In terms of biological role, could be responsible for synthesis of pseudouridine from uracil-55 in the psi GC loop of transfer RNAs. In Pyrobaculum arsenaticum (strain DSM 13514 / JCM 11321 / PZ6), this protein is Probable tRNA pseudouridine synthase B.